Reading from the N-terminus, the 88-residue chain is Small ribosomal subunit protein bS20 (88 aa).

Belongs to the bacterial ribosomal protein bS20 family.

Functionally, binds directly to 16S ribosomal RNA. This chain is Small ribosomal subunit protein bS20, found in Mycoplasmopsis synoviae (strain 53) (Mycoplasma synoviae).